The sequence spans 342 residues: Probable receptor-like protein kinase At4g10390 (342 aa).

The Protein kinase domain maps to 41–336; it reads SNFSRLIGSG…IKEIPSLSFL (296 aa). ATP-binding positions include 47–55 and K69; that span reads IGSGGYSSI. D165 functions as the Proton acceptor in the catalytic mechanism. Residues S169 and S201 each carry the phosphoserine modification. The residue at position 220 (Y220) is a Phosphotyrosine.

The protein belongs to the protein kinase superfamily. Ser/Thr protein kinase family.

It catalyses the reaction L-seryl-[protein] + ATP = O-phospho-L-seryl-[protein] + ADP + H(+). It carries out the reaction L-threonyl-[protein] + ATP = O-phospho-L-threonyl-[protein] + ADP + H(+). This chain is Probable receptor-like protein kinase At4g10390, found in Arabidopsis thaliana (Mouse-ear cress).